Here is a 337-residue protein sequence, read N- to C-terminus: 1-aminocyclopropane-1-carboxylate deaminase (337 aa).

An N6-(pyridoxal phosphate)lysine modification is found at Lys-50. Residue Ser-77 is the Nucleophile of the active site.

Belongs to the ACC deaminase/D-cysteine desulfhydrase family. In terms of assembly, homotrimer. Pyridoxal 5'-phosphate serves as cofactor.

The enzyme catalyses 1-aminocyclopropane-1-carboxylate + H2O = 2-oxobutanoate + NH4(+). In terms of biological role, catalyzes a cyclopropane ring-opening reaction, the irreversible conversion of 1-aminocyclopropane-1-carboxylate (ACC) to ammonia and alpha-ketobutyrate. Allows growth on ACC as a nitrogen source. The sequence is that of 1-aminocyclopropane-1-carboxylate deaminase from Rhizobium radiobacter (Agrobacterium tumefaciens).